Reading from the N-terminus, the 225-residue chain is Protein-L-isoaspartate O-methyltransferase (225 aa).

S75 is a catalytic residue.

The protein belongs to the methyltransferase superfamily. L-isoaspartyl/D-aspartyl protein methyltransferase family.

It is found in the cytoplasm. The enzyme catalyses [protein]-L-isoaspartate + S-adenosyl-L-methionine = [protein]-L-isoaspartate alpha-methyl ester + S-adenosyl-L-homocysteine. Catalyzes the methyl esterification of L-isoaspartyl residues in peptides and proteins that result from spontaneous decomposition of normal L-aspartyl and L-asparaginyl residues. It plays a role in the repair and/or degradation of damaged proteins. This is Protein-L-isoaspartate O-methyltransferase from Xanthomonas campestris pv. campestris (strain 8004).